The following is a 183-amino-acid chain: Cyanate hydratase (183 aa).

Residues Arg118, Glu121, and Ser144 contribute to the active site.

It belongs to the cyanase family.

The catalysed reaction is cyanate + hydrogencarbonate + 3 H(+) = NH4(+) + 2 CO2. In terms of biological role, catalyzes the reaction of cyanate with bicarbonate to produce ammonia and carbon dioxide. This is Cyanate hydratase from Cryptococcus neoformans var. neoformans serotype D (strain B-3501A) (Filobasidiella neoformans).